The primary structure comprises 1853 residues: MRKVISMLLVVAMLTTIFAAMIPQTVSAATMTVEIGKVTAAVGSKVEIPITLKGVPSKGMANCDFVLGYDPNVLEVTEVKPGSIIKDPDPSKSFDSAIYPDRKMIVFLFAEDSGRGTYAITQDGVFATIVATVKSAAAAPITLLEVGAFADNDLVEISTTFVAGGVNLGSSVPTTQPNVPSDGVVVEIGKVTGSVGTTVEIPVYFRGVPSKGIANCDFVFRYDPNVLEIIGIDPGDIIVDPNPTKSFDTAIYPDRKIIVFLFAEDSGTGAYAITKDGVFAKIRATVKSSAPGYITFDEVGGFADNDLVEQKVSFIDGGVNVGNATPTKGATPTNTATPTKSATATPTRPSVPTNTPTNTPANTPVSGNLKVEFYNSNPSDTTNSINPQFKVTNTGSSAIDLSKLTLRYYYTVDGQKDQTFWCDHAAIIGSNGSYNGITSNVKGTFVKMSSSTNNADTYLEISFTGGTLEPGAHVQIQGRFAKNDWSNYTQSNDYSFKSASQFVEWDQVTAYLNGVLVWGKEPGGSVVPSTQPVTTPPATTKPPATTKPPATTIPPSDDPNAIKIKVDTVNAKPGDTVNIPVRFSGIPSKGIANCDFVYSYDPNVLEIIEIKPGELIVDPNPDKSFDTAVYPDRKIIVFLFAEDSGTGAYAITKDGVFATIVAKVKSGAPNGLSVIKFVEVGGFANNDLVEQRTQFFDGGVNVGDTTVPTTPTTPVTTPTDDSNAVRIKVDTVNAKPGDTVRIPVRFSGIPSKGIANCDFVYSYDPNVLEIIEIEPGDIIVDPNPDKSFDTAVYPDRKIIVFLFAEDSGTGAYAITKDGVFATIVAKVKSGAPNGLSVIKFVEVGGFANNDLVEQKTQFFDGGVNVGDTTEPATPTTPVTTPTTTDDLDAVRIKVDTVNAKPGDTVRIPVRFSGIPSKGIANCDFVYSYDPNVLEIIEIEPGDIIVDPNPDKSFDTAVYPDRKIIVFLFAEDSGTGAYAITKDGVFATIVAKVKSGAPNGLSVIKFVEVGGFANNDLVEQKTQFFDGGVNVGDTTEPATPTTPVTTPTTTDDLDAVRIKVDTVNAKPGDTVRIPVRFSGIPSKGIANCDFVYSYDPNVLEIIEIEPGDIIVDPNPDKSFDTAVYPDRKIIVFLFAEDSGTGAYAITKDGVFATIVAKVKEGAPNGLSVIKFVEVGGFANNDLVEQKTQFFDGGVNVGDTTEPATPTTPVTTPTTTDDLDAVRIKVDTVNAKPGDTVRIPVRFSGIPSKGIANCDFVYSYDPNVLEIIEIEPGELIVDPNPTKSFDTAVYPDRKMIVFLFAEDSGTGAYAITEDGVFATIVAKVKSGAPNGLSVIKFVEVGGFANNDLVEQKTQFFDGGVNVGDTTEPATPTTPVTTPTTTDDLDAVRIKVDTVNAKPGDTVRIPVRFSGIPSKGIANCDFVYSYDPNVLEIIEIEPGDIIVDPNPDKSFDTAVYPDRKIIVFLFAEDSGTGAYAITKDGVFATIVAKVKEGAPNGLSVIKFVEVGGFANNDLVEQKTQFFDGGVNVGDTTVPTTSPTTTPPEPTITPNKLTLKIGRAEGRPGDTVEIPVNLYGVPQKGIASGDFVVSYDPNVLEIIEIEPGELIVDPNPTKSFDTAVYPDRKMIVFLFAEDSGTGAYAITEDGVFATIVAKVKEGAPEGFSAIEISEFGAFADNDLVEVETDLINGGVLVTNKPVIEGYKVSGYILPDFSFDATVAPLVKAGFKVEIVGTELYAVTDANGYFEITGVPANASGYTLKISRATYLDRVIANVVVTGDTSVSTSQAPIMMWVGDIVKDNSINLLDVAEVIRCFNATKGSANYVEELDINRNGAINMQDIMIVHKHFGATSSDYDAQ.

An N-terminal signal peptide occupies residues 1-28 (MRKVISMLLVVAMLTTIFAAMIPQTVSA). Cohesin domains follow at residues 29–182 (ATMT…VPSD) and 183–322 (GVVV…VNVG). Linker (Pro/Thr-rich) regions lie at residues 323–363 (NATP…PANT) and 523–559 (GGSVVPSTQPVTTPPATTKPPATTKPPATTIPPSDDP). Low complexity predominate over residues 323-364 (NATPTKGATPTNTATPTKSATATPTRPSVPTNTPTNTPANTP). 2 disordered regions span residues 323-367 (NATP…PVSG) and 525-559 (SVVPSTQPVTTPPATTKPPATTKPPATTIPPSDDP). The region spanning 365 to 523 (VSGNLKVEFY…GVLVWGKEPG (159 aa)) is the CBM3 domain. The span at 525–555 (SVVPSTQPVTTPPATTKPPATTKPPATTIPP) shows a compositional bias: low complexity. Cohesin domains are found at residues 560–704 (NAIK…NVGD), 724–866 (AVRI…VNVG), 889–1031 (AVRI…VNVG), 1054–1196 (AVRI…VNVG), 1219–1361 (AVRI…VNVG), 1384–1526 (AVRI…VNVG), and 1548–1690 (KLTL…VLVT). Residues 1785-1852 (IMMWVGDIVK…FGATSSDYDA (68 aa)) enclose the Dockerin domain.

O-glycosylated on most but not all Thr residues of the linker units. The reducing sugar is galactopyranose.

The protein localises to the secreted. Its function is as follows. Acts as a scaffolding protein in the cellulosome. It promotes binding of cellulose to the catalytic domains of the cellulolytic enzymes. This chain is Cellulosomal-scaffolding protein A (cipA), found in Acetivibrio thermocellus (strain ATCC 27405 / DSM 1237 / JCM 9322 / NBRC 103400 / NCIMB 10682 / NRRL B-4536 / VPI 7372) (Clostridium thermocellum).